The primary structure comprises 142 residues: Large ribosomal subunit protein uL13 (142 aa).

The protein belongs to the universal ribosomal protein uL13 family. As to quaternary structure, part of the 50S ribosomal subunit.

Functionally, this protein is one of the early assembly proteins of the 50S ribosomal subunit, although it is not seen to bind rRNA by itself. It is important during the early stages of 50S assembly. The protein is Large ribosomal subunit protein uL13 of Xanthomonas oryzae pv. oryzae (strain MAFF 311018).